Here is a 943-residue protein sequence, read N- to C-terminus: Calcium-activated chloride channel regulator 2 (943 aa).

An N-terminal signal peptide occupies residues 1 to 31 (MTQRSIAGPICNLKFVTLLVALSSELPFLGA). Residues 32–901 (GVQLQDNGYN…SDPVPARDYL (870 aa)) lie on the Extracellular side of the membrane. The metalloprotease domain stretch occupies residues 54-205 (NQNLISNIKE…CSSDITGIFV (152 aa)). N-linked (GlcNAc...) asparagine glycosylation is found at Asn-74 and Asn-150. His-164 contacts Zn(2+). Glu-165 is a catalytic residue. Residues His-168 and Asp-175 each contribute to the Zn(2+) site. N-linked (GlcNAc...) asparagine glycosylation is present at Asn-231. The 173-residue stretch at 311-483 (VVCLVLDVSS…NSMIDAFSRI (173 aa)) folds into the VWFA domain. N-linked (GlcNAc...) asparagine glycans are attached at residues Asn-522 and Asn-822. A helical transmembrane segment spans residues 902-922 (ILKGVLTAMGLIGIICLIIVV). At 923 to 943 (THHTLSRKKRADKKENGTKLL) the chain is on the cytoplasmic side.

This sequence belongs to the CLCR family. In terms of processing, the 141 kDa mature form is autoproteolytically cleaved by the metalloprotease domain, producing a 109 kDa form and a 35 kDa form. The cleavage is necessary for calcium-activated chloride channel (CaCC) activation activity. N-glycosylated. As to expression, expressed in cornea, skin, vagina, esophagus, and larynx (at protein level). Expressed in trachea and mammary gland. Weakly expressed in testis and kidney. Highly expressed in corneal epithelium, colon and trachea. Moderately expressed in brain, urogenital organs, bladder, uterus and prostate. Highly expressed in tissues containing stratified epithelium including cornea, esophagus, larynx, skin and vagina than those tissues which contain only epithelial monolayers. Expressed in normal breast epithelium but not in breast cancer. Highly expressed during epithelial stratification. Expressed in endothelial cells of lung. Expressed selectively in endothelia of small pulmonary arteries, arterioles, and subpleural and interlobular venules.

It is found in the cell membrane. It localises to the basal cell membrane. Its subcellular location is the cell junction. The protein resides in the secreted. Its function is as follows. Plays a role in modulating chloride current across the plasma membrane in a calcium-dependent manner, and cell adhesion. Involved in basal cell adhesion and/or stratification of squamous epithelia. May act as a tumor suppressor in breast and colorectal cancer. Plays a key role for cell adhesion in the beginning stages of lung metastasis via the binding to ITGB4. The sequence is that of Calcium-activated chloride channel regulator 2 (CLCA2) from Homo sapiens (Human).